The chain runs to 735 residues: Ribosomal protein S6 kinase alpha-1 (735 aa).

The residue at position 54 (S54) is a Phosphoserine. One can recognise a Protein kinase 1 domain in the interval F62–Y321. Residues L68–V76 and K94 each bind ATP. Residue D187 is the Proton acceptor of the active site. S221 carries the post-translational modification Phosphoserine; by PDPK1. The residue at position 307 (S307) is a Phosphoserine. One can recognise an AGC-kinase C-terminal domain in the interval S322–S391. T359 is modified (phosphothreonine). S363 bears the Phosphoserine mark. S369 and S380 each carry phosphoserine; by autocatalysis. Residues Y418–I675 form the Protein kinase 2 domain. ATP-binding positions include I424–C432 and K447. The active-site Proton acceptor is D535. T573 carries the phosphothreonine modification. A Phosphoserine modification is found at S732.

This sequence belongs to the protein kinase superfamily. AGC Ser/Thr protein kinase family. S6 kinase subfamily. In terms of assembly, forms a complex with either MAPK1/ERK2 or MAPK3/ERK1 in quiescent cells. Transiently dissociates following mitogenic stimulation. Interacts with ETV1/ER81 and FGFR1. It depends on Mg(2+) as a cofactor. Post-translationally, activated by phosphorylation at Ser-221 by PDPK1. Autophosphorylated on Ser-380, as part of the activation process. May be phosphorylated at Thr-359 and Ser-363 by MAPK1/ERK2 and MAPK3/ERK1. In terms of processing, N-terminal myristoylation results in an activated kinase in the absence of added growth factors.

It localises to the nucleus. Its subcellular location is the cytoplasm. The enzyme catalyses L-seryl-[protein] + ATP = O-phospho-L-seryl-[protein] + ADP + H(+). The catalysed reaction is L-threonyl-[protein] + ATP = O-phospho-L-threonyl-[protein] + ADP + H(+). With respect to regulation, upon extracellular signal or mitogen stimulation, phosphorylated at Thr-573 in the C-terminal kinase domain (CTKD) by MAPK1/ERK2 and MAPK3/ERK1. The activated CTKD then autophosphorylates Ser-380, allowing binding of PDPK1, which in turn phosphorylates Ser-221 in the N-terminal kinase domain (NTDK) leading to the full activation of the protein and subsequent phosphorylation of the substrates by the NTKD. Functionally, serine/threonine-protein kinase that acts downstream of ERK (MAPK1/ERK2 and MAPK3/ERK1) signaling and mediates mitogenic and stress-induced activation of the transcription factors CREB1, ETV1/ER81 and NR4A1/NUR77, regulates translation through RPS6 and EIF4B phosphorylation, and mediates cellular proliferation, survival, and differentiation by modulating mTOR signaling and repressing pro-apoptotic function of BAD and DAPK1. In fibroblast, is required for EGF-stimulated phosphorylation of CREB1, which results in the subsequent transcriptional activation of several immediate-early genes. In response to mitogenic stimulation (EGF and PMA), phosphorylates and activates NR4A1/NUR77 and ETV1/ER81 transcription factors and the cofactor CREBBP. Upon insulin-derived signal, acts indirectly on the transcription regulation of several genes by phosphorylating GSK3B at 'Ser-9' and inhibiting its activity. Phosphorylates RPS6 in response to serum or EGF via an mTOR-independent mechanism and promotes translation initiation by facilitating assembly of the pre-initiation complex. In response to insulin, phosphorylates EIF4B, enhancing EIF4B affinity for the EIF3 complex and stimulating cap-dependent translation. Is involved in the mTOR nutrient-sensing pathway by directly phosphorylating TSC2 at 'Ser-1798', which potently inhibits TSC2 ability to suppress mTOR signaling, and mediates phosphorylation of RPTOR, which regulates mTORC1 activity and may promote rapamycin-sensitive signaling independently of the PI3K/AKT pathway. Also involved in feedback regulation of mTORC1 and mTORC2 by phosphorylating DEPTOR. Mediates cell survival by phosphorylating the pro-apoptotic proteins BAD and DAPK1 and suppressing their pro-apoptotic function. Promotes the survival of hepatic stellate cells by phosphorylating CEBPB in response to the hepatotoxin carbon tetrachloride (CCl4). Mediates induction of hepatocyte prolifration by TGFA through phosphorylation of CEBPB. Is involved in cell cycle regulation by phosphorylating the CDK inhibitor CDKN1B, which promotes CDKN1B association with 14-3-3 proteins and prevents its translocation to the nucleus and inhibition of G1 progression. Phosphorylates EPHA2 at 'Ser-897', the RPS6KA-EPHA2 signaling pathway controls cell migration. In response to mTORC1 activation, phosphorylates EIF4B at 'Ser-406' and 'Ser-422' which stimulates bicarbonate cotransporter SLC4A7 mRNA translation, increasing SLC4A7 protein abundance and function. This chain is Ribosomal protein S6 kinase alpha-1 (Rps6ka1), found in Rattus norvegicus (Rat).